Consider the following 223-residue polypeptide: N-terminal Xaa-Pro-Lys N-methyltransferase 1 (223 aa).

Position 1 is an N-acetylmethionine (Met1). Thr2 carries the post-translational modification N-acetylthreonine; in N-terminal Xaa-Pro-Lys N-methyltransferase 1, N-terminally processed. S-adenosyl-L-methionine contacts are provided by residues Gly69, Arg74, 91-93 (DVT), 119-120 (LQ), and Gln135.

It belongs to the methyltransferase superfamily. NTM1 family.

The protein localises to the nucleus. The enzyme catalyses N-terminal L-alanyl-L-prolyl-L-lysyl-[protein] + 3 S-adenosyl-L-methionine = N-terminal N,N,N-trimethyl-L-alanyl-L-prolyl-L-lysyl-[protein] + 3 S-adenosyl-L-homocysteine + 3 H(+). The catalysed reaction is N-terminal L-seryl-L-prolyl-L-lysyl-[protein] + 3 S-adenosyl-L-methionine = N-terminal N,N,N-trimethyl-L-seryl-L-prolyl-L-lysyl-[protein] + 3 S-adenosyl-L-homocysteine + 3 H(+). It carries out the reaction N-terminal L-prolyl-L-prolyl-L-lysyl-[protein] + 2 S-adenosyl-L-methionine = N-terminal N,N-dimethyl-L-prolyl-L-prolyl-L-lysyl-[protein] + 2 S-adenosyl-L-homocysteine + 2 H(+). Distributive alpha-N-methyltransferase that methylates the N-terminus of target proteins containing the N-terminal motif [Ala/Gly/Pro/Ser]-Pro-Lys when the initiator Met is cleaved. Specifically catalyzes mono-, di- or tri-methylation of the exposed alpha-amino group of the Ala, Gly or Ser residue in the [Ala/Gly/Ser]-Pro-Lys motif and mono- or di-methylation of Pro in the Pro-Pro-Lys motif. Some of the substrates may be primed by NTMT2-mediated monomethylation. Catalyzes the trimethylation of the N-terminal Gly in CENPA (after removal of Met-1). Responsible for the N-terminal methylation of KLHL31, MYL2, MYL3, RB1, RCC1, RPL23A and SET. Required during mitosis for normal bipolar spindle formation and chromosome segregation via its action on RCC1. This is N-terminal Xaa-Pro-Lys N-methyltransferase 1 (NTMT1) from Ailuropoda melanoleuca (Giant panda).